We begin with the raw amino-acid sequence, 436 residues long: GTPase Der (436 aa).

2 EngA-type G domains span residues 4-167 (PVVA…KDEE) and 176-351 (IKLS…ENHK). GTP-binding positions include 10–17 (GRPNVGKS), 57–61 (DTGGI), 119–122 (NKVD), 182–189 (GRPNVGKS), 229–233 (DTAGM), and 294–297 (NKWD). The 85-residue stretch at 352 to 436 (KRVQSSTLNE…PIRIIPRKRN (85 aa)) folds into the KH-like domain.

It belongs to the TRAFAC class TrmE-Era-EngA-EngB-Septin-like GTPase superfamily. EngA (Der) GTPase family. Associates with the 50S ribosomal subunit.

Functionally, GTPase that plays an essential role in the late steps of ribosome biogenesis. In Staphylococcus carnosus (strain TM300), this protein is GTPase Der.